The following is a 617-amino-acid chain: Chaperone protein HscA homolog (617 aa).

Belongs to the heat shock protein 70 family.

In terms of biological role, chaperone involved in the maturation of iron-sulfur cluster-containing proteins. Has a low intrinsic ATPase activity which is markedly stimulated by HscB. The polypeptide is Chaperone protein HscA homolog (Photobacterium profundum (strain SS9)).